Reading from the N-terminus, the 209-residue chain is MTQTHSSEKRRRLEPGRLVLASHNQGKLREIRELLSPFGLETVSAAELGLPEPVEDGNSFIANAEIKARFVAEKTGSVALADDSGLCVEALDEAPGIYSARWAGEPRDFDKAMEKVHQELTAKGAEASKRAHFVCALSLCWPDGHVENFEGHVWGNLIWPPRGDRGFGYDPMFVADGHQQSFAEIGAEAKKAISHRSEAFKQLLAACLR.

A substrate-binding site is contributed by 22-27 (SHNQGK). The active-site Proton acceptor is aspartate 83. Residue aspartate 83 coordinates Mg(2+). Substrate contacts are provided by residues serine 84, 167-170 (FGYD), lysine 190, and 195-196 (HR).

The protein belongs to the HAM1 NTPase family. In terms of assembly, homodimer. Mg(2+) is required as a cofactor.

It carries out the reaction XTP + H2O = XMP + diphosphate + H(+). It catalyses the reaction dITP + H2O = dIMP + diphosphate + H(+). The enzyme catalyses ITP + H2O = IMP + diphosphate + H(+). In terms of biological role, pyrophosphatase that catalyzes the hydrolysis of nucleoside triphosphates to their monophosphate derivatives, with a high preference for the non-canonical purine nucleotides XTP (xanthosine triphosphate), dITP (deoxyinosine triphosphate) and ITP. Seems to function as a house-cleaning enzyme that removes non-canonical purine nucleotides from the nucleotide pool, thus preventing their incorporation into DNA/RNA and avoiding chromosomal lesions. The protein is dITP/XTP pyrophosphatase of Zymomonas mobilis subsp. mobilis (strain ATCC 31821 / ZM4 / CP4).